The chain runs to 765 residues: MGPLQGDGGPALGGADVAPRLSPVRVWPRPQAPKEPALHPMGLSLPKEKGLILCLWSKFCRWFQRRESWAQSRDEQNLLQQKRIWESPLLLAAKDNDVQALNKLLKYEDCKVHQRGAMGETALHIAALYDNLEAAMVLMEAAPELVFEPMTSELYEGQTALHIAVVNQNMNLVRALLARRASVSARATGTAFRRSPCNLIYFGEHPLSFAACVNSEEIVRLLIEHGADIRAQDSLGNTVLHILILQPNKTFACQMYNLLLSYDRHGDHLQPLDLVPNHQGLTPFKLAGVEGNTVMFQHLMQKRKHTQWTYGPLTSTLYDLTEIDSSGDEQSLLELIITTKKREARQILDQTPVKELVSLKWKRYGRPYFCMLGAIYLLYIICFTMCCIYRPLKPRTNNRTSPRDNTLLQQKLLQEAYMTPKDDIRLVGELVTVIGAIIILLVEVPDIFRMGVTRFFGQTILGGPFHVLIITYAFMVLVTMVMRLISASGEVVPMSFALVLGWCNVMYFARGFQMLGPFTIMIQKMIFGDLMRFCWLMAVVILGFASAFYIIFQTEDPEELGHFYDYPMALFSTFELFLTIIDGPANYNVDLPFMYSITYAAFAIIATLLMLNLLIAMMGDTHWRVAHERDELWRAQIVATTVMLERKLPRCLWPRSGICGREYGLGDRWFLRVEDRQDLNRQRIQRYAQAFHTRGSEDLDKDSVEKLELGCPFSPHLSLPMPSVSRSTSRSSANWERLRQGTLRRDLRGIINRGLEDGESWEYQI.

At 1-367 the chain is on the cytoplasmic side; it reads MGPLQGDGGP…SLKWKRYGRP (367 aa). 3 ANK repeats span residues 84–114, 118–147, and 156–185; these read IWESPLLLAAKDNDVQALNKLLKYEDCKVHQ, MGETALHIAALYDNLEAAMVLMEAAPELVF, and EGQTALHIAVVNQNMNLVRALLARRASVSA. Positions 133-143 are interaction with calmodulin; the sequence is EAAMVLMEAAP. Tyr201 carries the post-translational modification Phosphotyrosine; by SRC. ANK repeat units follow at residues 202–231, 235–277, and 279–308; these read FGEHPLSFAACVNSEEIVRLLIEHGADIRA, LGNT…LVPN, and QGLTPFKLAGVEGNTVMFQHLMQKRKHTQW. A helical membrane pass occupies residues 368–388; it reads YFCMLGAIYLLYIICFTMCCI. The Extracellular portion of the chain corresponds to 389-425; it reads YRPLKPRTNNRTSPRDNTLLQQKLLQEAYMTPKDDIR. Residue Asn398 is glycosylated (N-linked (GlcNAc...) asparagine). Residues 426 to 448 form a helical membrane-spanning segment; the sequence is LVGELVTVIGAIIILLVEVPDIF. Over 449–463 the chain is Cytoplasmic; it reads RMGVTRFFGQTILGG. The chain crosses the membrane as a helical span at residues 464-483; it reads PFHVLIITYAFMVLVTMVMR. Residues 484–489 are Extracellular-facing; that stretch reads LISASG. The helical transmembrane segment at 490-509 threads the bilayer; sequence EVVPMSFALVLGWCNVMYFA. Residues 510-529 are Cytoplasmic-facing; it reads RGFQMLGPFTIMIQKMIFGD. A helical transmembrane segment spans residues 530–552; that stretch reads LMRFCWLMAVVILGFASAFYIIF. Residues 553–565 are Extracellular-facing; sequence QTEDPEELGHFYD. The pore-forming intramembrane region spans 566-585; that stretch reads YPMALFSTFELFLTIIDGPA. Residues 581-585 carry the Selectivity filter motif; that stretch reads IDGPA. Residue Asp582 coordinates Ca(2+). The Extracellular portion of the chain corresponds to 586–596; it reads NYNVDLPFMYS. Residues 597–617 form a helical membrane-spanning segment; the sequence is ITYAAFAIIATLLMLNLLIAM. Over 618-765 the chain is Cytoplasmic; sequence MGDTHWRVAH…EDGESWEYQI (148 aa). The interaction with S100A10 stretch occupies residues 638-642; the sequence is VATTV. Positions 731 to 751 are interaction with calmodulin; that stretch reads SSANWERLRQGTLRRDLRGII. Phosphothreonine; by PKC/PRKCA is present on Thr742.

This sequence belongs to the transient receptor (TC 1.A.4) family. TrpV subfamily. TRPV6 sub-subfamily. Homotetramer. Probably also forms heterotetramers with TRPV5. Interacts with TRPV5. Interacts with S100A10 and probably with the ANAX2-S100A10 heterotetramer. The interaction with S100A10 is required for the trafficking to the plasma membrane. Interacts with BSPRY. Interacts with TCAF1 and TCAF2 isoform 2. Interacts with calmodulin. In terms of processing, glycosylated. Phosphorylation at Tyr-201 by SRC leads to an increased calcium influx through the channel. Probably dephosphorylated at this site by PTPN1. Phosphorylation by PRKCA at the calmodulin binding site delays channel inactivation. Expressed at high levels in the gastrointestinal tract, including esophagus, stomach, duodenum, jejunum, ileum and colon, and in pancreas, placenta, prostate and salivary gland. Expressed at moderate levels in liver, kidney and testis. Expressed in trophoblasts of placenta villus trees (at protein level). Expressed in locally advanced prostate cancer, metastatic and androgen-insensitive prostatic lesions but not detected in healthy prostate tissue and benign prostatic hyperplasia.

The protein localises to the cell membrane. It carries out the reaction Ca(2+)(in) = Ca(2+)(out). Calcium selective cation channel that mediates Ca(2+) uptake in various tissues, including the intestine. Important for normal Ca(2+) ion homeostasis in the body, including bone and skin. The channel is activated by low internal calcium level, probably including intracellular calcium store depletion, and the current exhibits an inward rectification. Inactivation includes both a rapid Ca(2+)-dependent and a slower Ca(2+)-calmodulin-dependent mechanism; the latter may be regulated by phosphorylation. In vitro, is slowly inhibited by Mg(2+) in a voltage-independent manner. Heteromeric assembly with TRPV5 seems to modify channel properties. TRPV5-TRPV6 heteromultimeric concatemers exhibit voltage-dependent gating. The polypeptide is Transient receptor potential cation channel subfamily V member 6 (TRPV6) (Homo sapiens (Human)).